Reading from the N-terminus, the 975-residue chain is MDLNSASSVVLQVLTQATSQDTAVLKPAEEQLKQWETQPGFYSVLLNIFTNHTLDINVRWLAVLYFKHGIDRYWRRVAPHALSEEEKSTLRAGLITNFNEPINQIATQIAVLIAKVARLDCPRQWPELIPTLVESVKVQDDLRQHRALLTFYHVTKTLASKRLAADRKLFYDLASGIYNFACSLWNHHTDTFLQHVSSGNEAAVLSSLERTLLSLKVLRKLTVNGFVEPHKNMEVMGFLHGIFERLKQFLECSRSIGTDNVCRDRLEKTIILFTKVLLDFLDQHPISFTPLIQRSLEFSVSYVFTEVGEGVTFERFIVQCMNLIKMIVKNYAYKPSKNFEDSSPETLEAHKIKMAFFTYPTLTEICRRLVSHYFLLTEEELTMWEEDPEGFTVEETGGDSWKYSLRPCTEVLFIDIFHEYNQTLTPVLLEMMQTLEGPTNVEDMNALLIKDAVYNAVGLAAFELFDSVDFDQWFKTQLLPELQVSHNRYKPLRRRVIWLIGQWISVKFKSDLRPMLYEAICNLLQDQDLVVRIETATTLKLTVDDFEFRTDQFLPYLETMFTLLFQLLQQVTECDTKMHVLHVLSCVIERVNVQIRPYVGCLVQYLPLLWKQSEEHNMLRCAILTTLIHLVQGLGADSKNLYPFLLPVIQLSTDVSQPPHVYLLEDGLELWLVTLENSPCVTPELLRIFQNMSPLLELSSENLRTCFKIINGYIFLSSTEFLQTYAAGLCQSFYELLPEITTEGQVQVLKVVENALKVNPVLGPQMFQRILPCVFRGVIEGERYPVVMSIYLAVMGRVLLQNTSFFSSLLNEMGHEFNQEMDQLLGNVIEMWVDRMDNITQPERKKLSALALLSLLPSDNSVIQDKFCGIINISVEALHDVMTEDPETRTYKDCMLMSQHEEPKVTEDEEPPTEQDKRKKMLALKDPVHTVSLQQFIYEKLKAQQEILGEQGFQSLMETVDTEIVTQLQEFLQGF.

At Met-1 the chain carries N-acetylmethionine. Residues 28–100 (AEEQLKQWET…RAGLITNFNE (73 aa)) form the Importin N-terminal domain. HEAT repeat units follow at residues 123 to 160 (RQWP…TLAS), 283 to 317 (QHPI…ERFI), 318 to 356 (VQCM…KMAF), 422 to 459 (QTLT…AVGL), 473 to 509 (WFKT…VKFK), 511 to 548 (DLRP…DFEF), 555 to 593 (PYLE…RVNV), 600 to 636 (GCLV…GLGA), 640 to 677 (NLYP…TLEN), 683 to 720 (PELL…SSTE), 731 to 773 (QSFY…ILPC), 819 to 849 (QEMD…KLSA), 850 to 887 (LALL…EDPE), and 957 to 974 (METV…FLQG). Position 343 is a phosphoserine (Ser-343).

Belongs to the importin beta family. In terms of assembly, interacts with UBE2E3 and RPL12.

The protein localises to the cytoplasm. Its subcellular location is the nucleus. Its function is as follows. Functions in nuclear protein import as nuclear transport receptor. Serves as receptor for nuclear localization signals (NLS) in cargo substrates. Is thought to mediate docking of the importin/substrate complex to the nuclear pore complex (NPC) through binding to nucleoporin and the complex is subsequently translocated through the pore by an energy requiring, Ran-dependent mechanism. At the nucleoplasmic side of the NPC, Ran binds to the importin, the importin/substrate complex dissociates and importin is re-exported from the nucleus to the cytoplasm where GTP hydrolysis releases Ran. The directionality of nuclear import is thought to be conferred by an asymmetric distribution of the GTP- and GDP-bound forms of Ran between the cytoplasm and nucleus. Mediates the nuclear import of RPL12, and of UBE2E3. The protein is Importin-11 (Ipo11) of Mus musculus (Mouse).